Here is a 348-residue protein sequence, read N- to C-terminus: CCAAT/enhancer-binding protein beta (348 aa).

The interval 1–24 (MQRLVVWDPVCLPLPPPPPAFKSM) is required for Lys-174 sumoylation. The residue at position 3 (Arg3) is an Asymmetric dimethylarginine; by CARM1. Positions 24–135 (MEVANFYYEA…YGGKNCKKAA (112 aa)) are required for MYC transcriptional repression. Lys43 is subject to N6-acetyllysine; alternate. Lys43 is subject to N6-methylated lysine; alternate. Disordered stretches follow at residues 44-65 (AAPAAPPADRPGPRPPTGELGS) and 79-112 (LEPLGAPQAPAPTTASDTFEAAPSAPAPVPASSG). A compositionally biased stretch (pro residues) spans 47–59 (AAPPADRPGPRPP). The short motif at 116–124 (DFLSDLFSD) is the 9aaTAD element. N6-acetyllysine; by KAT2A and KAT2B is present on residues Lys129 and Lys132. Lys133 carries the post-translational modification N6-acetyllysine; by KAT2A and KAT2B; alternate. Lys133 is covalently cross-linked (Glycyl lysine isopeptide (Lys-Gly) (interchain with G-Cter in SUMO2); alternate). The interval 158 to 178 (APLHPPPPPPPPPAELKAEPG) is disordered. Over residues 160 to 171 (LHPPPPPPPPPA) the composition is skewed to pro residues. Lys174 participates in a covalent cross-link: Glycyl lysine isopeptide (Lys-Gly) (interchain with G-Cter in SUMO2); alternate. A Glycyl lysine isopeptide (Lys-Gly) (interchain with G-Cter in SUMO); alternate cross-link involves residue Lys174. Residues Lys185 and Lys187 each participate in a glycyl lysine isopeptide (Lys-Gly) (interchain with G-Cter in SUMO2) cross-link. A compositionally biased stretch (low complexity) spans 219-259 (SGSSGSLSTSSSSSPPGTPSPADAKATPAAAACYAGAAPAP). A disordered region spans residues 219-277 (SGSSGSLSTSSSSSPPGTPSPADAKATPAAAACYAGAAPAPSQVKSKAKKTVDKHSDEY). At Thr227 the chain carries Phosphothreonine; by GSK3-beta. Residues Ser228 and Ser229 are each glycosylated (O-linked (GlcNAc) serine). Ser232 is modified (phosphoserine; by GSK3-beta). Thr236 is subject to Phosphothreonine; by RPS6KA1, CDK2 and MAPK. Glycyl lysine isopeptide (Lys-Gly) (interchain with G-Cter in SUMO2) cross-links involve residues Lys263 and Lys265. Residues 268-277 (KTVDKHSDEY) are compositionally biased toward basic and acidic residues. Thr269 bears the Phosphothreonine; by RPS6KA1 and PKC/PRKCA mark. Residues 274–337 (SDEYKIRRER…STLRNLFKTL (64 aa)) form the bZIP domain. The tract at residues 278–298 (KIRRERNNIAVRKSRDKAKMR) is basic motif. Ser291 carries the post-translational modification Phosphoserine; by PKC/PRKCA. The leucine-zipper stretch occupies residues 300–307 (LETQHKVL). Position 328 is a phosphoserine; by CaMK2 (Ser328). Lys335 is covalently cross-linked (Glycyl lysine isopeptide (Lys-Gly) (interchain with G-Cter in SUMO2)).

It belongs to the bZIP family. C/EBP subfamily. In terms of assembly, binds DNA as a homodimer and as a heterodimer. Interacts with ATF4. Binds DNA as a heterodimer with ATF4. Interacts with MYB; within the complex, MYB and CEBPB bind to different promoter regions. Can form stable heterodimers with CEBPA, CEBPD and CEBPG. Interacts with SIX1. Interacts with TRIM28 and PTGES2. Interacts with PRDM16. Interacts with CCDC85B. Forms a complex with THOC5. Interacts with ZNF638; this interaction increases transcriptional activation. Interacts with CIDEA and CIDEC; these interactions increase transcriptional activation of a subset of CEBPB downstream target genes. Interacts with DDIT3/CHOP. Interacts with EP300; recruits EP300 to chromatin. Interacts with RORA; the interaction disrupts interaction with EP300. Interacts (not methylated) with MED23, MED26, SMARCA2, SMARCB1 and SMARCC1. Interacts with KAT2A and KAT2B. Interacts with ATF5; EP300 is required for ATF5 and CEBPB interaction and DNA binding. Interacts with NFE2L1; the heterodimer represses expression of DSPP during odontoblast differentiation. Post-translationally, methylated. Methylation at Arg-3 by CARM1 and at Lys-43 by EHMT2 inhibit transactivation activity. Methylation is probably inhibited by phosphorylation at Thr-236. In terms of processing, sumoylated by polymeric chains of SUMO2 or SUMO3. Sumoylation at Lys-174 is required for inhibition of T-cells proliferation. In adipocytes, sumoylation at Lys-174 by PIAS1 leads to ubiquitination and subsequent proteasomal degradation. Desumoylated by SENP2, which abolishes ubiquitination and stabilizes protein levels. Ubiquitinated, leading to proteasomal degradation. Post-translationally, phosphorylated at Thr-236 by MAPK and CDK2, serves to prime phosphorylation at Thr-227 and Ser-232 by GSK3B and acquire DNA-binding as well as transactivation activities, required to induce adipogenesis. MAPK and CDK2 act sequentially to maintain Thr-236 in the primed phosphorylated state during mitotical cloning expansion and thereby progression of terminal differentiation. Phosphorylation at Thr-269 enhances transactivation activity. Phosphorylation at Ser-328 in response to calcium increases transactivation activity. Phosphorylated at Thr-236 by RPS6KA1. In terms of processing, O-glycosylated, glycosylation at Ser-228 and Ser-229 prevents phosphorylation on Thr-236, Ser-232 and Thr-227 and DNA binding activity which delays the adipocyte differentiation program. Acetylated. Acetylation at Lys-43 is an important and dynamic regulatory event that contributes to its ability to transactivate target genes, including those associated with adipogenesis and adipocyte function. Deacetylation by HDAC1 represses its transactivation activity. Acetylated by KAT2A and KAT2B within a cluster of lysine residues between amino acids 129-133, this acetylation is strongly induced by glucocorticoid treatment and enhances transactivation activity.

It is found in the nucleus. Its subcellular location is the cytoplasm. Important transcription factor regulating the expression of genes involved in immune and inflammatory responses. Also plays a significant role in adipogenesis, as well as in the gluconeogenic pathway, liver regeneration, and hematopoiesis. The consensus recognition site is 5'-T[TG]NNGNAA[TG]-3'. Its functional capacity is governed by protein interactions and post-translational protein modifications. During early embryogenesis, plays essential and redundant roles with CEBPA. Has a promitotic effect on many cell types such as hepatocytes and adipocytes but has an antiproliferative effect on T-cells by repressing MYC expression, facilitating differentiation along the T-helper 2 lineage. Binds to regulatory regions of several acute-phase and cytokines genes and plays a role in the regulation of acute-phase reaction and inflammation. Also plays a role in intracellular bacteria killing. During adipogenesis, is rapidly expressed and, after activation by phosphorylation, induces CEBPA and PPARG, which turn on the series of adipocyte genes that give rise to the adipocyte phenotype. The delayed transactivation of the CEBPA and PPARG genes by CEBPB appears necessary to allow mitotic clonal expansion and thereby progression of terminal differentiation. Essential for female reproduction because of a critical role in ovarian follicle development. Restricts osteoclastogenesis: together with NFE2L1; represses expression of DSPP during odontoblast differentiation. The sequence is that of CCAAT/enhancer-binding protein beta (CEBPB) from Bos taurus (Bovine).